A 411-amino-acid polypeptide reads, in one-letter code: Diaminobutyrate--2-oxoglutarate transaminase (411 aa).

N6-(pyridoxal phosphate)lysine is present on lysine 262.

Belongs to the class-III pyridoxal-phosphate-dependent aminotransferase family. Pyridoxal 5'-phosphate is required as a cofactor.

The enzyme catalyses L-2,4-diaminobutanoate + 2-oxoglutarate = L-aspartate 4-semialdehyde + L-glutamate. It functions in the pathway amine and polyamine biosynthesis; ectoine biosynthesis; L-ectoine from L-aspartate 4-semialdehyde: step 1/3. Catalyzes reversively the conversion of L-aspartate beta-semialdehyde (ASA) to L-2,4-diaminobutyrate (DABA) by transamination with L-glutamate. The protein is Diaminobutyrate--2-oxoglutarate transaminase (ectB) of Vibrio cholerae serotype O1 (strain ATCC 39315 / El Tor Inaba N16961).